A 105-amino-acid polypeptide reads, in one-letter code: Saimiri transformation-associated protein (105 aa).

At Met-1–Gly-75 the chain is on the cytoplasmic side. Positions Met-1 to Gly-75 are disordered. A Collagen-like domain is found at Gly-15–Pro-74. Over residues Gln-20–Ser-71 the composition is skewed to pro residues. A helical membrane pass occupies residues Leu-76–Ile-96. The Extracellular portion of the chain corresponds to Leu-97–Asn-105.

In terms of assembly, binds to host RAS and TRAF2.

The protein localises to the host membrane. Its function is as follows. Acts synergistically with Tip to stimulate NF-kappa-B activity and interleukin-2 gene expression by binding to host TRAF proteins. Activation of NF-kappa-B protects lymphocytes from apoptosis, thereby facilitating viral induced cell transformation. The polypeptide is Saimiri transformation-associated protein (Saimiriine herpesvirus 2 (strain 484-77) (SaHV-2)).